A 532-amino-acid chain; its full sequence is Intercellular adhesion molecule 1 (532 aa).

A signal peptide spans 1-27 (MAPSGPQPALPILVVLLGALLLGPGNA). At 28–480 (QTSVFPPEVI…TVNVLSPRYE (453 aa)) the chain is on the extracellular side. 2 Ig-like C2-type domains span residues 41–103 (GGSV…QSSA) and 128–193 (GKNL…LDLR). The N-linked (GlcNAc...) asparagine glycan is linked to asparagine 47. 2 disulfide bridges follow: cysteine 48-cysteine 92 and cysteine 52-cysteine 96. 2 N-linked (GlcNAc...) asparagine glycosylation sites follow: asparagine 130 and asparagine 145. The cysteines at positions 135 and 186 are disulfide-linked. A Cell attachment site; atypical motif is present at residues 152-154 (RGE). N-linked (GlcNAc...) asparagine glycans are attached at residues asparagine 183, asparagine 202, asparagine 267, asparagine 296, and asparagine 316. One can recognise an Ig-like C2-type 3 domain in the interval 230 to 297 (DTQGTVVCSL…LLCGVMLGNQ (68 aa)). The cysteines at positions 237 and 290 are disulfide-linked. One can recognise an Ig-like C2-type 4 domain in the interval 325 to 378 (GTEVIVECEAHPRAKVMLNGVPAQPPGPRAQFLLKATPEDNGRSFSCSATLEVA). Residues cysteine 332 and cysteine 371 are joined by a disulfide bond. N-linked (GlcNAc...) asparagine glycans are attached at residues asparagine 385 and asparagine 406. Intrachain disulfides connect cysteine 403/cysteine 419, cysteine 419/cysteine 457, and cysteine 431/cysteine 457. Positions 412 to 464 (NSQQTPMCQAWGNPLPQLKCLKDGTFPLPIGQSVTVTRDLEGTYLCQARSTRG) constitute an Ig-like C2-type 5 domain. The chain crosses the membrane as a helical span at residues 481-503 (VVIIPVVAAAVILGTAGVATYLY). The Cytoplasmic portion of the chain corresponds to 504-532 (NRQRKIRKYRLQQAQNGTPMKPNTQATPP). Residues 513–532 (RLQQAQNGTPMKPNTQATPP) form a disordered region. Over residues 515–532 (QQAQNGTPMKPNTQATPP) the composition is skewed to polar residues. A phosphothreonine mark is found at threonine 521 and threonine 530.

The protein belongs to the immunoglobulin superfamily. ICAM family. Homodimer. Interacts with MUC1 and promotes cell aggregation in epithelial cells. Interacts with ARHGEF26/SGEF. Interacts (on T cell side) with CD81, CD247 and CD9 at immunological synapses between antigen-presenting cells and T cells. Monoubiquitinated, which is promoted by MARCH9 and leads to endocytosis.

The protein resides in the membrane. In terms of biological role, ICAM proteins are ligands for the leukocyte adhesion protein LFA-1 (integrin alpha-L/beta-2). During leukocyte trans-endothelial migration, ICAM1 engagement promotes the assembly of endothelial apical cups through ARHGEF26/SGEF and RHOG activation. This is Intercellular adhesion molecule 1 (ICAM1) from Macaca mulatta (Rhesus macaque).